Here is a 144-residue protein sequence, read N- to C-terminus: MKTFSAKPHEVNREWFVIDAAGKVLGRLAAEIAHRLRGKHKPIYTPHVDTGDFIVVINVDKMRVTGNKAESKMYYRHSGYPGGIYETSFAKMHARFPGRPLEKAVKGMLPKGPLGYAMLKKLKIYAGAAHPHAAQQPRQLEVRA.

Belongs to the universal ribosomal protein uL13 family. As to quaternary structure, part of the 50S ribosomal subunit.

In terms of biological role, this protein is one of the early assembly proteins of the 50S ribosomal subunit, although it is not seen to bind rRNA by itself. It is important during the early stages of 50S assembly. The protein is Large ribosomal subunit protein uL13 of Nitrosospira multiformis (strain ATCC 25196 / NCIMB 11849 / C 71).